The following is a 522-amino-acid chain: Peptide chain release factor 3 (522 aa).

In terms of domain architecture, tr-type G spans 9 to 276 (KKRRTFAIIS…SFVNLAPAPQ (268 aa)). GTP contacts are provided by residues 18–25 (SHPDAGKT), 86–90 (DTPGH), and 140–143 (NKLD).

It belongs to the TRAFAC class translation factor GTPase superfamily. Classic translation factor GTPase family. PrfC subfamily.

The protein resides in the cytoplasm. Its function is as follows. Increases the formation of ribosomal termination complexes and stimulates activities of RF-1 and RF-2. It binds guanine nucleotides and has strong preference for UGA stop codons. It may interact directly with the ribosome. The stimulation of RF-1 and RF-2 is significantly reduced by GTP and GDP, but not by GMP. The sequence is that of Peptide chain release factor 3 from Lactobacillus gasseri (strain ATCC 33323 / DSM 20243 / BCRC 14619 / CIP 102991 / JCM 1131 / KCTC 3163 / NCIMB 11718 / NCTC 13722 / AM63).